The chain runs to 329 residues: PTS-dependent dihydroxyacetone kinase 1, dihydroxyacetone-binding subunit DhaK (329 aa).

One can recognise a DhaK domain in the interval 7–329; it reads GTDQVVEQMV…LKLPVDTIAW (323 aa). Dihydroxyacetone-binding positions include 53 to 56, Lys-104, and Asp-109; that span reads GSGH. The Proton acceptor role is filled by His-56. The Tele-hemiaminal-histidine intermediate role is filled by His-218.

As to quaternary structure, homodimer. The dihydroxyacetone kinase complex is composed of a homodimer of DhaM, a homodimer of DhaK and the subunit DhaL.

The protein localises to the cytoplasm. It carries out the reaction dihydroxyacetone + phosphoenolpyruvate = dihydroxyacetone phosphate + pyruvate. It functions in the pathway polyol metabolism; glycerol degradation. Functionally, dihydroxyacetone binding subunit of the dihydroxyacetone kinase, which is responsible for the phosphoenolpyruvate (PEP)-dependent phosphorylation of dihydroxyacetone via a phosphoryl group transfer from DhaL-ATP. The chain is PTS-dependent dihydroxyacetone kinase 1, dihydroxyacetone-binding subunit DhaK from Listeria innocua serovar 6a (strain ATCC BAA-680 / CLIP 11262).